A 657-amino-acid chain; its full sequence is Zinc finger CCCH domain-containing protein 50 (657 aa).

2 ANK repeats span residues 68 to 97 (EART…CVDV) and 104 to 136 (DGAT…DPAT). The segment covering 176 to 206 (SVASGSSSPPLSSSPDEGNRSPSSRSSSLSP) has biased composition (low complexity). The tract at residues 176-222 (SVASGSSSPPLSSSPDEGNRSPSSRSSSLSPITVDRGKKEYPVDPTL) is disordered. C3H1-type zinc fingers lie at residues 274-302 (PYTA…HGVF) and 311-333 (YRTR…AHDE). Residues 507–566 (YSPRALDPSSLAHSPFGGMSPRSPRTMEPTSPLSARVGAPATQRPSVGSPRNSSAWGTVG) form a disordered region. The span at 549 to 562 (QRPSVGSPRNSSAW) shows a compositional bias: polar residues.

This is Zinc finger CCCH domain-containing protein 50 from Oryza sativa subsp. japonica (Rice).